The following is a 294-amino-acid chain: 4-hydroxy-tetrahydrodipicolinate synthase (294 aa).

Thr-45 is a binding site for pyruvate. Tyr-133 acts as the Proton donor/acceptor in catalysis. Lys-161 acts as the Schiff-base intermediate with substrate in catalysis. Ile-203 provides a ligand contact to pyruvate.

Belongs to the DapA family. Homotetramer; dimer of dimers.

It is found in the cytoplasm. It carries out the reaction L-aspartate 4-semialdehyde + pyruvate = (2S,4S)-4-hydroxy-2,3,4,5-tetrahydrodipicolinate + H2O + H(+). Its pathway is amino-acid biosynthesis; L-lysine biosynthesis via DAP pathway; (S)-tetrahydrodipicolinate from L-aspartate: step 3/4. Functionally, catalyzes the condensation of (S)-aspartate-beta-semialdehyde [(S)-ASA] and pyruvate to 4-hydroxy-tetrahydrodipicolinate (HTPA). In Thioalkalivibrio sulfidiphilus (strain HL-EbGR7), this protein is 4-hydroxy-tetrahydrodipicolinate synthase.